The following is a 313-amino-acid chain: MKLTRRLTLAAFASALALGTAMPAFAADLIAIITPAHDNPFFKAEAVGAEAKAKELGYETLVMTHDDDANKQSEMIDTAIGRGAKAIILDNAGADASVAAVKKAKDAGIPSFLIDREINATGVAVAQIVSNNYQGAQLGAQEFVKLMGEKGNYVELVGKESDTNAGIRSQGYHDVIDDYPEMKSVAKQSANWSQTEAYSKMETILQANPDIKGVISGNDTMAMGAIAALQAAGRKDVIVVGFDGSNDVRDSIKSGGIKATVLQPAYAQAQLAVEQADAYIKNKTTPKEEKQLMDCVLINADNAGKLETFALTN.

The signal sequence occupies residues 1-26 (MKLTRRLTLAAFASALALGTAMPAFA). Residues N39, 115 to 116 (DR), 162 to 164 (DTN), R168, N218, D243, and Q263 contribute to the D-apiofuranose site.

Belongs to the bacterial solute-binding protein 2 family.

Its subcellular location is the periplasm. In terms of biological role, part of an ABC transporter complex involved in D-apiose import. Binds D-apiose, D-ribose and D-ribulose. This Rhizobium etli (strain ATCC 51251 / DSM 11541 / JCM 21823 / NBRC 15573 / CFN 42) protein is D-apiose import binding protein.